Reading from the N-terminus, the 355-residue chain is MSNENNNLSLYGWSDNLFRQKQISQYKDMSHGRIIVTHKTCYEVVAEDGVYLCELTGNMIYGRVPDEYPCTGDWVIFQPFDANKGIIVDILPRERALYRKKNGRVADRQAIASYVDKAFIVQSLDDNFNVRRAERFIAQVMEEKIKPVLVLNKADLGCDRQKIDEAIKHIARQFPVFITSIRQPQTILRLRESITKGETVVFVGSSGVGKSSLVNALCGKSVLNTSDISLSTGKGRHTSTRREMVLMDGSGVLIDTPGVREFGLAIDNPDSLTEMFEISDYAESCRFSDCKHIDEPGCAVLEAVHNGTLDHKVYESYLKLRREAWHFSASEHEKRKKEKSFTKLVEEVKKRKANF.

A CP-type G domain is found at 103 to 262; it reads GRVADRQAIA…LIDTPGVREF (160 aa). Residues 152–155 and 204–212 each bind GTP; these read NKAD and GSSGVGKSS. Residues C285, C290, H292, and C298 each contribute to the Zn(2+) site.

It belongs to the TRAFAC class YlqF/YawG GTPase family. RsgA subfamily. Monomer. Associates with 30S ribosomal subunit, binds 16S rRNA. Zn(2+) serves as cofactor.

The protein resides in the cytoplasm. In terms of biological role, one of several proteins that assist in the late maturation steps of the functional core of the 30S ribosomal subunit. Helps release RbfA from mature subunits. May play a role in the assembly of ribosomal proteins into the subunit. Circularly permuted GTPase that catalyzes slow GTP hydrolysis, GTPase activity is stimulated by the 30S ribosomal subunit. The protein is Small ribosomal subunit biogenesis GTPase RsgA 1 of Bacteroides thetaiotaomicron (strain ATCC 29148 / DSM 2079 / JCM 5827 / CCUG 10774 / NCTC 10582 / VPI-5482 / E50).